The chain runs to 377 residues: Homoserine O-acetyltransferase (377 aa).

In terms of domain architecture, AB hydrolase-1 spans 48-347; sequence NVVLIEHALT…PVGHDAFLTE (300 aa). S143 functions as the Nucleophile in the catalytic mechanism. Substrate is bound at residue R213. Residues D311 and H341 contribute to the active site. D342 contacts substrate.

This sequence belongs to the AB hydrolase superfamily. MetX family. In terms of assembly, homodimer.

Its subcellular location is the cytoplasm. The catalysed reaction is L-homoserine + acetyl-CoA = O-acetyl-L-homoserine + CoA. Its pathway is amino-acid biosynthesis; L-methionine biosynthesis via de novo pathway; O-acetyl-L-homoserine from L-homoserine: step 1/1. Transfers an acetyl group from acetyl-CoA to L-homoserine, forming acetyl-L-homoserine. In Corynebacterium glutamicum (strain ATCC 13032 / DSM 20300 / JCM 1318 / BCRC 11384 / CCUG 27702 / LMG 3730 / NBRC 12168 / NCIMB 10025 / NRRL B-2784 / 534), this protein is Homoserine O-acetyltransferase.